A 217-amino-acid chain; its full sequence is Protein canopy 4 (217 aa).

The N-terminal stretch at 1–27 (MEMFTVFLFYMFSLVLANQEERLPNKC) is a signal peptide. Intrachain disulfides connect cysteine 27/cysteine 185, cysteine 30/cysteine 173, and cysteine 83/cysteine 145. A disordered region spans residues 194–217 (MGMKGSEEESEGKDGKETHDAGEL). The span at 205–217 (GKDGKETHDAGEL) shows a compositional bias: basic and acidic residues.

This sequence belongs to the canopy family.

It localises to the secreted. This Danio rerio (Zebrafish) protein is Protein canopy 4 (cnpy4).